Consider the following 259-residue polypeptide: Tryptophan synthase alpha chain (259 aa).

Catalysis depends on proton acceptor residues glutamate 35 and aspartate 46.

This sequence belongs to the TrpA family. In terms of assembly, tetramer of two alpha and two beta chains.

The catalysed reaction is (1S,2R)-1-C-(indol-3-yl)glycerol 3-phosphate + L-serine = D-glyceraldehyde 3-phosphate + L-tryptophan + H2O. Its pathway is amino-acid biosynthesis; L-tryptophan biosynthesis; L-tryptophan from chorismate: step 5/5. The alpha subunit is responsible for the aldol cleavage of indoleglycerol phosphate to indole and glyceraldehyde 3-phosphate. The sequence is that of Tryptophan synthase alpha chain from Methanococcus maripaludis (strain C5 / ATCC BAA-1333).